Here is a 122-residue protein sequence, read N- to C-terminus: MIQMQSYLDVADNSGAKQVMCFKVLGGSKRRYAGIGDIIKVTVKDAIPRGKVKKGEVYDAVVVRTRKGVRRADGSLIRFDGNAAVLLNSKQEPIGTRIFGPVTRELRSEKFMKIVSLAPEVL.

Belongs to the universal ribosomal protein uL14 family. Part of the 50S ribosomal subunit. Forms a cluster with proteins L3 and L19. In the 70S ribosome, L14 and L19 interact and together make contacts with the 16S rRNA in bridges B5 and B8.

In terms of biological role, binds to 23S rRNA. Forms part of two intersubunit bridges in the 70S ribosome. The protein is Large ribosomal subunit protein uL14 of Stenotrophomonas maltophilia (strain R551-3).